We begin with the raw amino-acid sequence, 317 residues long: Transaldolase (317 aa).

The Schiff-base intermediate with substrate role is filled by Lys-132.

Belongs to the transaldolase family. Type 1 subfamily. Homodimer.

The protein localises to the cytoplasm. It catalyses the reaction D-sedoheptulose 7-phosphate + D-glyceraldehyde 3-phosphate = D-erythrose 4-phosphate + beta-D-fructose 6-phosphate. It functions in the pathway carbohydrate degradation; pentose phosphate pathway; D-glyceraldehyde 3-phosphate and beta-D-fructose 6-phosphate from D-ribose 5-phosphate and D-xylulose 5-phosphate (non-oxidative stage): step 2/3. Functionally, transaldolase is important for the balance of metabolites in the pentose-phosphate pathway. This chain is Transaldolase, found in Yersinia pseudotuberculosis serotype IB (strain PB1/+).